Consider the following 246-residue polypeptide: tRNA pseudouridine synthase A (246 aa).

Aspartate 52 functions as the Nucleophile in the catalytic mechanism. A substrate-binding site is contributed by tyrosine 110.

It belongs to the tRNA pseudouridine synthase TruA family. As to quaternary structure, homodimer.

It catalyses the reaction uridine(38/39/40) in tRNA = pseudouridine(38/39/40) in tRNA. Formation of pseudouridine at positions 38, 39 and 40 in the anticodon stem and loop of transfer RNAs. The chain is tRNA pseudouridine synthase A from Exiguobacterium sp. (strain ATCC BAA-1283 / AT1b).